A 170-amino-acid chain; its full sequence is NADH-quinone oxidoreductase subunit B (170 aa).

[4Fe-4S] cluster contacts are provided by Cys46, Cys47, Cys111, and Cys141.

Belongs to the complex I 20 kDa subunit family. As to quaternary structure, NDH-1 is composed of 14 different subunits. Subunits NuoB, C, D, E, F, and G constitute the peripheral sector of the complex. It depends on [4Fe-4S] cluster as a cofactor.

It is found in the cell membrane. It carries out the reaction a quinone + NADH + 5 H(+)(in) = a quinol + NAD(+) + 4 H(+)(out). Its function is as follows. NDH-1 shuttles electrons from NADH, via FMN and iron-sulfur (Fe-S) centers, to quinones in the respiratory chain. The immediate electron acceptor for the enzyme in this species is believed to be a menaquinone. Couples the redox reaction to proton translocation (for every two electrons transferred, four hydrogen ions are translocated across the cytoplasmic membrane), and thus conserves the redox energy in a proton gradient. In Geobacillus sp. (strain WCH70), this protein is NADH-quinone oxidoreductase subunit B.